A 269-amino-acid polypeptide reads, in one-letter code: 3-methyl-2-oxobutanoate hydroxymethyltransferase (269 aa).

Residues D51 and D90 each coordinate Mg(2+). Residues 51–52 (DS), D90, and K120 each bind 3-methyl-2-oxobutanoate. E122 contributes to the Mg(2+) binding site. The active-site Proton acceptor is the E187.

Belongs to the PanB family. As to quaternary structure, homodecamer; pentamer of dimers. Requires Mg(2+) as cofactor.

The protein resides in the cytoplasm. The catalysed reaction is 3-methyl-2-oxobutanoate + (6R)-5,10-methylene-5,6,7,8-tetrahydrofolate + H2O = 2-dehydropantoate + (6S)-5,6,7,8-tetrahydrofolate. The protein operates within cofactor biosynthesis; (R)-pantothenate biosynthesis; (R)-pantoate from 3-methyl-2-oxobutanoate: step 1/2. Its function is as follows. Catalyzes the reversible reaction in which hydroxymethyl group from 5,10-methylenetetrahydrofolate is transferred onto alpha-ketoisovalerate to form ketopantoate. The protein is 3-methyl-2-oxobutanoate hydroxymethyltransferase of Tropheryma whipplei (strain TW08/27) (Whipple's bacillus).